A 26-amino-acid chain; its full sequence is uncharacterized protein (26 aa).

This is an uncharacterized protein from Saccharomyces cerevisiae (strain ATCC 204508 / S288c) (Baker's yeast).